A 118-amino-acid chain; its full sequence is NADPH-dependent 7-cyano-7-deazaguanine reductase (118 aa).

Cys31 serves as the catalytic Thioimide intermediate. The active-site Proton donor is Asp38. Residues 53-55 (IEL) and 72-73 (YE) contribute to the substrate site.

The protein belongs to the GTP cyclohydrolase I family. QueF type 1 subfamily.

The protein resides in the cytoplasm. The catalysed reaction is 7-aminomethyl-7-carbaguanine + 2 NADP(+) = 7-cyano-7-deazaguanine + 2 NADPH + 3 H(+). The protein operates within tRNA modification; tRNA-queuosine biosynthesis. In terms of biological role, catalyzes the NADPH-dependent reduction of 7-cyano-7-deazaguanine (preQ0) to 7-aminomethyl-7-deazaguanine (preQ1). In Prosthecochloris aestuarii (strain DSM 271 / SK 413), this protein is NADPH-dependent 7-cyano-7-deazaguanine reductase.